The following is a 194-amino-acid chain: uncharacterized protein (194 aa).

Disordered regions lie at residues 52–71 and 86–194; these read KGRT…EKYK and AEAL…DGGS. Polar residues-rich tracts occupy residues 53–63, 98–111, and 119–132; these read GRTTQSAINSE, ALTS…SSTN, and IAHS…TSPA. A compositionally biased stretch (basic residues) spans 133-169; the sequence is NRHRRKEKERTRSNHRHGSHRRHEPYRTHLSRHHRHS. The span at 175-194 shows a compositional bias: basic and acidic residues; sequence SKRDDRYERRREHSPNDGGS.

This is an uncharacterized protein from Schizosaccharomyces pombe (strain 972 / ATCC 24843) (Fission yeast).